The following is a 93-amino-acid chain: Small ribosomal subunit protein uS19 (93 aa).

The protein belongs to the universal ribosomal protein uS19 family.

In terms of biological role, protein S19 forms a complex with S13 that binds strongly to the 16S ribosomal RNA. This chain is Small ribosomal subunit protein uS19, found in Oenococcus oeni (strain ATCC BAA-331 / PSU-1).